We begin with the raw amino-acid sequence, 425 residues long: Beta-1,4-galactosyltransferase galt-1 (425 aa).

Topologically, residues 1 to 8 (MPRITASK) are cytoplasmic. Residues 9-29 (IVLLIALSFCITVIYHFPIAT) form a helical; Signal-anchor for type II membrane protein membrane-spanning segment. Topologically, residues 30–425 (RSSKEYDEYG…FDSVVGLLDL (396 aa)) are lumenal. N-linked (GlcNAc...) asparagine glycans are attached at residues N109 and N152. One can recognise a GT92 domain in the interval 189 to 394 (KMSICVPALF…LLRVYHYKDK (206 aa)).

The protein belongs to the glycosyltransferase 92 family. It depends on Mn(2+) as a cofactor. Post-translationally, N-glycosylated. As to expression, expressed in intestine and coelomocytes.

The protein resides in the golgi apparatus. It is found in the golgi stack membrane. With respect to regulation, inhibited by EDTA, Cu(2+) and Zn(2+). Functionally, catalyzes the transfer of beta-galactose from UDP-galactose to position 4 of alpha-1,6-linked fucose at the reducing end GlcNAc in N-glycan cores. Involved in susceptibility to the nematotoxic C.cinerea galectin Cgl2, likely by contributing to the synthesis of core alpha-1,6-fucosylated N-glycans to which Cgl2 binds. This is Beta-1,4-galactosyltransferase galt-1 from Caenorhabditis elegans.